We begin with the raw amino-acid sequence, 223 residues long: Twisted gastrulation protein homolog 1 (223 aa).

An N-terminal signal peptide occupies residues 1 to 25 (MKLHYVAVLTLAILMFLTWLPASLS). N-linked (GlcNAc...) asparagine glycosylation is found at asparagine 52 and asparagine 81.

This sequence belongs to the twisted gastrulation protein family. Interacts with CHRD and BMP4. This interaction enhances CHRD/BMP4 complex formation. Interacts with BMP7.

It is found in the secreted. In terms of biological role, may be involved in dorsoventral axis formation. Seems to antagonize BMP signaling by forming ternary complexes with CHRD and BMPs, thereby preventing BMPs from binding to their receptors. In addition to the anti-BMP function, also has pro-BMP activity, partly mediated by cleavage and degradation of CHRD, which releases BMPs from ternary complexes. May be an important modulator of BMP-regulated cartilage development and chondrocyte differentiation. May play a role in thymocyte development. The sequence is that of Twisted gastrulation protein homolog 1 (TWSG1) from Pongo abelii (Sumatran orangutan).